We begin with the raw amino-acid sequence, 417 residues long: Testis-specific Y-encoded-like protein 5 (417 aa).

The segment covering 1-25 (MSGRSRGRKSSRAKNRGKGRAKARV) has biased composition (basic residues). Disordered regions lie at residues 1-55 (MSGR…QVQA), 93-112 (AAGD…AASL), 127-202 (GTVG…EGSM), and 391-417 (KGKE…SQSN). Residues 27–37 (PAPDDAPRDPD) are compositionally biased toward basic and acidic residues. Positions 93–103 (AAGDHGQAAAR) are enriched in low complexity. The span at 182-191 (GEEKKEERDA) shows a compositional bias: basic and acidic residues. The segment covering 406 to 417 (METTQPGVSQSN) has biased composition (polar residues).

It belongs to the nucleosome assembly protein (NAP) family. In terms of assembly, interacts with USP7.

Its function is as follows. Involved in modulation of cell growth and cellular response to gamma radiation probably via regulation of the Akt signaling pathway. Involved in regulation of p53/TP53. Suppresses p53/TP53 protein levels and promotes its ubiquitination; the function is dependent on USP7 and independent on MDM2. Proposed to displace p53/TP53 from interaction with USP7. This Homo sapiens (Human) protein is Testis-specific Y-encoded-like protein 5 (TSPYL5).